The primary structure comprises 757 residues: DNA endonuclease RBBP8 (757 aa).

Residues 22–45 (DLWTKLKEYHDKETQGLQVKVTKL) are essential for binding to the MRN complex and for RPA focus formation on DNA damage. Residues 35 to 84 (TQGLQVKVTKLKKERILDAQRLEEFFTKNQQLREQQKVLHETIKVLEDRL) are a coiled coil. Positions 45–160 (LKKERILDAQ…TDLESEEDVI (116 aa)) are required for interaction with LMO4, probably by stabilizing the interaction through RPPB8 dimerization. Residues Lys-62 and Lys-115 each participate in a glycyl lysine isopeptide (Lys-Gly) (interchain with G-Cter in SUMO2) cross-link. A coiled-coil region spans residues 117–138 (ITELMNEKNTLQEENKKLSEQL). Lys-193 participates in a covalent cross-link: Glycyl lysine isopeptide (Lys-Gly) (interchain with G-Cter in SUMO2). Ser-272 is modified (phosphoserine). At Thr-309 the chain carries Phosphothreonine. A phosphoserine mark is found at Ser-320, Ser-321, and Ser-343. Residues 348–375 (GKKTHLKTVPLSNTSAPGPEKPRSKSED) are disordered. Glycyl lysine isopeptide (Lys-Gly) (interchain with G-Cter in SUMO2) cross-links involve residues Lys-354 and Lys-372. Residue Ser-373 is modified to Phosphoserine. Residues Lys-390, Lys-399, and Lys-405 each participate in a glycyl lysine isopeptide (Lys-Gly) (interchain with G-Cter in SUMO2) cross-link. Residues 407–417 (TSEPISEQGNI) show a composition bias toward polar residues. Residues 407-430 (TSEPISEQGNIGHSKDTDRDKHVV) form a disordered region. Residues 419-429 (HSKDTDRDKHV) show a composition bias toward basic and acidic residues. Residues Lys-433 and Lys-443 each participate in a glycyl lysine isopeptide (Lys-Gly) (interchain with G-Cter in SUMO2) cross-link. Positions 484-488 (PLDLS) are PXDLS motif. The PXDLS motif signature appears at 484-488 (PLDLS). The tract at residues 503–551 (CENSKIRFRQVTLYEALKPIPRDSSSSRKALSGSCGLTKDSPEEPCLQE) is damage-recruitment motif. A Glycyl lysine isopeptide (Lys-Gly) (interchain with G-Cter in SUMO2); alternate cross-link involves residue Lys-520. The disordered stretch occupies residues 524–544 (RDSSSSRKALSGSCGLTKDSP). Residues Lys-564 and Lys-570 each participate in a glycyl lysine isopeptide (Lys-Gly) (interchain with G-Cter in SUMO2) cross-link. A Glycyl lysine isopeptide (Lys-Gly) (interchain with G-Cter in SUMO2); alternate cross-link involves residue Lys-596. Glycyl lysine isopeptide (Lys-Gly) (interchain with G-Cter in SUMO2) cross-links involve residues Lys-605, Lys-630, and Lys-632. A required for interaction with LMO4, probably by making physical contact with LMO4 region spans residues 633–677 (SLQNNQDVSFENIQWSIDPGADLSQYKMGVTVDDTKDGSQSRLAG). Ser-656 bears the Phosphoserine; by ATM mark. Lys-668 is covalently cross-linked (Glycyl lysine isopeptide (Lys-Gly) (interchain with G-Cter in SUMO2)). Phosphoserine is present on Ser-671. The span at 696-728 (KKQEQKGEESPNGERKMNDSLEDMFDRTTHEEY) shows a compositional bias: basic and acidic residues. Residues 696–757 (KKQEQKGEES…TTTKKPNISW (62 aa)) are disordered. Lys-711 is covalently cross-linked (Glycyl lysine isopeptide (Lys-Gly) (interchain with G-Cter in SUMO2)). Phosphoserine is present on Ser-715. Positions 747–757 (STTTKKPNISW) are enriched in polar residues.

The protein belongs to the COM1/SAE2/CtIP family. As to quaternary structure, homotetramer; formed by antiparallel association of helical extensions protruding from the N-termini of two parallel coiled-coil dimers. Forms a dumbbell-shaped particle in which polar globular domains are held about 30 nm apart by a central rod. Homotetramerization is required for DNA-end resection and repair. Interacts (via the PXDLS motif) with CTBP1; the interaction is disrupted via binding of the adenovirus E1A to CTBP1. Component of the BRCA1-RBBP8 complex. Interacts (the Ser-321 phosphorylated form) with BRCA1 (via the C-terminal BRCT domains): the interaction occurs in the G2 phase, ubiquitinates RBBP8 and involves RBBP8 in BRCA1-dependent G2/M checkpoint control on DNA damage. Interacts with RB1. Interacts with the MRN complex. Interacts directly with MRE11; the interaction is required for efficient homologous recombination (HR) and regulation of the MRN complex. Interacts directly with RAD50. Interacts (when phosphorylated by CDK1) with NBN; promoting association with the MRN complex. Interacts with LMO4 (via the LIM zinc-binding 1 domain). Interacts with SIAH1. Interacts with RNF138. Interacts with EXD2. Interacts with CUL3 and KLHL15; this interaction leads to RBBP8 proteasomal degradation. Directly interacts with PIN1; this interaction depends upon RBBP8 phosphorylation, predominantly at Thr-309. Interacts with FZR1; this interaction leads to APC/C-mediated RBBP8 proteasomal degradation. Interacts with AUNIP; leading to recruit RBBP8 to sites of DNA damage. Interacts with SAMHD1. Interacts with HDGFL2. In terms of processing, hyperphosphorylation upon ionizing radiation results in dissociation from BRCA1. Phosphorylation by CDK1 is essential for the recruitment to DNA and the DNA repair function. Phosphorylated on Ser-321 as cells enter G2 phase. This phosphorylation is required for binding BRCA1 and for the G2/M DNA damage transition checkpoint control. Phosphorylation at Thr-309, probably catalyzed by CDK2, is required for PIN1-binding, while phosphorylation at Ser-272 serves as a PIN1 isomerization site. Phosphorylation at Thr-309 is cell-cycle dependent. It steadily increases during S phase, peaks at late S/G2 phase, and drops at G1. Phosphorylation is not required for tetramerization. Binds to DNA more strongly when dephosphorylated. Ubiquitinated. Ubiquitination at multiple sites by BRCA1 (via its N-terminal RING domain) does not lead to its proteasomal degradation but instead the ubiquitinated RBBP8 binds to chromatin following DNA damage and may play a role in G2/M checkpoint control. Ubiquitinated by RNF138 at its N-terminus. Ubiquitinated through 'Lys-48' by the E3 CUL3-KLHL15 complex; this modification leads to proteasomal degradation. Ubiquitinated by the E3 FZR1/APC/C complex; this modification leads to proteasomal degradation.

It is found in the nucleus. It localises to the chromosome. Endonuclease that cooperates with the MRE11-RAD50-NBN (MRN) complex in DNA-end resection, the first step of double-strand break (DSB) repair through the homologous recombination (HR) pathway. HR is restricted to S and G2 phases of the cell cycle and preferentially repairs DSBs resulting from replication fork collapse. Key determinant of DSB repair pathway choice, as it commits cells to HR by preventing classical non-homologous end-joining (NHEJ). Specifically promotes the endonuclease activity of the MRN complex to clear DNA ends containing protein adducts: recruited to DSBs by NBN following phosphorylation by CDK1, and promotes the endonuclease activity of MRE11 to clear protein-DNA adducts and generate clean double-strand break ends. Functions downstream of the MRN complex and ATM, promotes ATR activation and its recruitment to DSBs in the S/G2 phase facilitating the generation of ssDNA. Component of the BRCA1-RBBP8 complex that regulates CHEK1 activation and controls cell cycle G2/M checkpoints on DNA damage. During immunoglobulin heavy chain class-switch recombination, promotes microhomology-mediated alternative end joining (A-NHEJ) and plays an essential role in chromosomal translocations. Binds preferentially to DNA Y-junctions and to DNA substrates with blocked ends and promotes intermolecular DNA bridging. The sequence is that of DNA endonuclease RBBP8 (RBBP8) from Bos taurus (Bovine).